A 901-amino-acid polypeptide reads, in one-letter code: Bifunctional protein STORR (901 aa).

Residues 12-32 (TSSVVALLLALVSILSSVVVL) form a helical membrane-spanning segment. Cys-513 is a binding site for heme.

It in the N-terminal section; belongs to the cytochrome P450 family. In the C-terminal section; belongs to the aldo/keto reductase family. Heme is required as a cofactor.

It is found in the membrane. The catalysed reaction is (R)-reticuline + NADP(+) = 1,2-dehydroreticuline + NADPH + H(+). The enzyme catalyses (S)-reticuline + reduced [NADPH--hemoprotein reductase] + O2 = 1,2-dehydroreticuline + oxidized [NADPH--hemoprotein reductase] + 2 H2O + H(+). The protein operates within alkaloid biosynthesis; morphine biosynthesis. Its function is as follows. Bifunctional protein involved in the biosynthesis of morphinan-type benzylisoquinoline alkaloids. Required for the isomerization of (S)- to (R)-reticuline. The cytochrome P450 module is responsible for the conversion of (S)-reticuline to 1,2-dehydroreticuline while the oxidoreductase module converts 1,2-dehydroreticuline to (R)-reticuline. The chain is Bifunctional protein STORR from Papaver somniferum (Opium poppy).